Reading from the N-terminus, the 506-residue chain is CDK5 regulatory subunit-associated protein 3 (506 aa).

3 consecutive short sequence motifs (shuffled ATG8-binding motif) follow at residues 267 to 270 (IDWG), 292 to 295 (IDWG), and 310 to 313 (IDWG). The tract at residues 269–506 (WGDFGVEAVS…RPVNLMGTSL (238 aa)) is required for interaction with UFL1 and mediates interaction with CHEK1. Positions 355 to 370 (DELMELEIFLARRAVE) are RPL10a-binding domain (RBD). K450 is covalently cross-linked (Glycyl lysine isopeptide (Lys-Gly) (interchain with G-Cter in SUMO2)).

It belongs to the CDK5RAP3 family. As to quaternary structure, substrate adapter component of the UFM1 ribosome E3 ligase (UREL) complex, composed of UFL1, DDRGK1 and CDK5RAP3. Interaction with UFL1 anchors CDK5RAP3 in the cytoplasm, preventing its translocation to the nucleus which allows expression of the CCND1 cyclin and progression of cells through the G1/S transition. Interacts with ATG8 family proteins MAP1LC3A, MAP1LC3B, GABARAP, GABARAPL1 and GABARAPL2. Interacts with CDK5R1; competes with CDK5RAP1 and CDK5RAP2. Interacts with RELA. Interacts with CHEK1; may negatively regulate CHEK1 and thereby stimulate entry into mitosis. Interacts with CDKN2A/ARF and MDM2; forms a ternary complex involved in regulation of p53/TP53. Interacts with MAPK14. Interacts with CCNB1. Interacts with TUBG1; may regulate CDK5RAP3 in mitotic G2/M transition checkpoint. Post-translationally, may be phosphorylated by CDK5. Ubiquitinated. Probably triggers proteasomal degradation and is negatively regulated by UFL1. In terms of processing, may be ufmylated. Post-translationally, cleaved by caspases early during apoptosis, the resulting peptides may play a role in rupture of the nuclear envelope.

Its subcellular location is the endoplasmic reticulum membrane. It localises to the cytoplasm. The protein resides in the nucleus. The protein localises to the cytoskeleton. It is found in the microtubule organizing center. Its subcellular location is the centrosome. Substrate adapter of E3 ligase complexes mediating ufmylation, the covalent attachment of the ubiquitin-like modifier UFM1 to substrate proteins, and which is involved in various processes, such as ribosome recycling and reticulophagy (also called ER-phagy). As part of the UREL complex, plays a key role in ribosome recycling by promoting mono-ufmylation of RPL26/uL24 subunit of the 60S ribosome. Ufmylation of RPL26/uL24 occurs on free 60S ribosomes following ribosome dissociation: it weakens the junction between post-termination 60S subunits and SEC61 translocons, promoting release and recycling of the large ribosomal subunit from the endoplasmic reticulum membrane. Ufmylation of RPL26/uL24 and subsequent 60S ribosome recycling either take place after normal termination of translation or after ribosome stalling during cotranslational translocation at the endoplasmic reticulum. Within the UREL complex, CDK5RAP3 acts as a substrate adapter that constrains UFL1 ligase activity to mono-ufmylate RPL26/uL24 at 'Lys-134'. The UREL complex is also involved in reticulophagy in response to endoplasmic reticulum stress by promoting ufmylation of proteins such as CYB5R3, thereby promoting lysosomal degradation of ufmylated proteins. Also acts as a regulator of transcription: negatively regulates NF-kappa-B-mediated gene transcription through the control of RELA phosphorylation. Also regulates mitotic G2/M transition checkpoint and mitotic G2 DNA damage checkpoint. Through its interaction with CDKN2A/ARF and MDM2 may induce MDM2-dependent p53/TP53 ubiquitination, stabilization and activation in the nucleus, thereby promoting G1 cell cycle arrest and inhibition of cell proliferation. May also play a role in the rupture of the nuclear envelope during apoptosis. May regulate MAPK14 activity by regulating its dephosphorylation by PPM1D/WIP1. Required for liver development. This Pongo abelii (Sumatran orangutan) protein is CDK5 regulatory subunit-associated protein 3.